An 883-amino-acid chain; its full sequence is Alanine--tRNA ligase (883 aa).

H563, H567, C677, and H681 together coordinate Zn(2+).

Belongs to the class-II aminoacyl-tRNA synthetase family. Zn(2+) serves as cofactor.

It is found in the cytoplasm. It catalyses the reaction tRNA(Ala) + L-alanine + ATP = L-alanyl-tRNA(Ala) + AMP + diphosphate. Functionally, catalyzes the attachment of alanine to tRNA(Ala) in a two-step reaction: alanine is first activated by ATP to form Ala-AMP and then transferred to the acceptor end of tRNA(Ala). Also edits incorrectly charged Ser-tRNA(Ala) and Gly-tRNA(Ala) via its editing domain. This is Alanine--tRNA ligase from Cereibacter sphaeroides (strain ATCC 17025 / ATH 2.4.3) (Rhodobacter sphaeroides).